We begin with the raw amino-acid sequence, 113 residues long: MSQEIYDYANQLERAVRALPEYQKVLEVKEAIQADVSASELFDEFVAMQEKIQGMMQSGQMPTAEEQTSIQELSQKIEANDQLKAYFEAQQALSVYMSDIERIVFAPLKDLVK.

Belongs to the UPF0342 family.

The sequence is that of UPF0342 protein SPy_0811/M5005_Spy0626 from Streptococcus pyogenes serotype M1.